Here is a 181-residue protein sequence, read N- to C-terminus: Adenine phosphoribosyltransferase (181 aa).

Belongs to the purine/pyrimidine phosphoribosyltransferase family. Homodimer.

It localises to the cytoplasm. The enzyme catalyses AMP + diphosphate = 5-phospho-alpha-D-ribose 1-diphosphate + adenine. It participates in purine metabolism; AMP biosynthesis via salvage pathway; AMP from adenine: step 1/1. Catalyzes a salvage reaction resulting in the formation of AMP, that is energically less costly than de novo synthesis. This is Adenine phosphoribosyltransferase from Chelativorans sp. (strain BNC1).